Consider the following 70-residue polypeptide: DNA-binding transcriptional activator AlpA (70 aa).

Residues 12 to 31 (LPAVIQKTGMARATIYDWLN) constitute a DNA-binding region (H-T-H motif).

Its function is as follows. Positive regulator of the expression of the slpA gene. When overexpressed, leads to suppression of the capsule overproduction and UV sensitivity phenotypes of cells mutant for the Lon ATP-dependent protease. Part of the cryptic P4-like prophage CP4-57. Overexpression of AlpA leads to excision of the CP4-57 prophage by IntA. This inactivates ssrA (the gene upstream of the prophage) that encodes tmRNA which is required to rescue stalled ribosomes in a process known as trans-translation. This is DNA-binding transcriptional activator AlpA from Escherichia coli (strain K12).